Reading from the N-terminus, the 122-residue chain is MQDNSSHSRESASAGDDPLGIDKLTVDYDYLLYKMRDYVQSIQLDTTELCKKQNEVMVNGIIENTIDKNIAKFKELLEKCDTLENHYEMLNQLAIITDTFKERIAEAVNNYNSLKKGASKSK.

Over residues 1-10 (MQDNSSHSRE) the composition is skewed to basic and acidic residues. A disordered region spans residues 1 to 21 (MQDNSSHSRESASAGDDPLGI). A coiled-coil region spans residues 63–95 (ENTIDKNIAKFKELLEKCDTLENHYEMLNQLAI).

The protein belongs to the BLOC1S4 family. Component of the biogenesis of lysosome-related organelles complex-1 (BLOC-1) composed of at least BLI1, BLS1, CNL1, KXD1, SNN1 and VAB2.

The protein localises to the cytoplasm. Its function is as follows. Component of the biogenesis of lysosome-related organelles complex-1 (BLOC-1), a complex that is involved in endosomal cargo sorting. The sequence is that of Biogenesis of lysosome-related organelles complex 1 subunit CNL1 (CNL1) from Saccharomyces cerevisiae (strain ATCC 204508 / S288c) (Baker's yeast).